The primary structure comprises 610 residues: Dopamine beta-hydroxylase (610 aa).

Over 1-9 (MQVPSPSVR) the chain is Cytoplasmic. Residues 10–30 (EAASMYGTAVAVFLVILVAAL) form a helical; Signal-anchor for type II membrane protein membrane-spanning segment. Topologically, residues 31–610 (QGSAPAESPF…TVLNISGGKG (580 aa)) are intragranular. A DOMON domain is found at 50 to 166 (GTLELSWNIS…GTVHLVYGFL (117 aa)). Cystine bridges form between cysteine 147–cysteine 589, cysteine 225–cysteine 276, cysteine 262–cysteine 288, cysteine 383–cysteine 496, cysteine 387–cysteine 558, and cysteine 459–cysteine 481. N-linked (GlcNAc...) asparagine glycosylation occurs at asparagine 177. The active site involves tyrosine 223. Residues histidine 255 and histidine 256 each coordinate Cu(2+). Positions 326, 405, 407, and 480 each coordinate Cu(2+). Residue histidine 405 is part of the active site. A glycan (N-linked (GlcNAc...) asparagine) is linked at asparagine 559. The segment at 585-610 (PTPHCPASQAQSPAGPTVLNISGGKG) is disordered.

It belongs to the copper type II ascorbate-dependent monooxygenase family. In terms of assembly, homotetramer; composed of two disulfide-linked dimers. Requires Cu(2+) as cofactor. Proteolytic cleavage after the membrane-anchor leads to the release of the soluble form. In terms of processing, N-glycosylated. In terms of tissue distribution, detected in chromaffin granules in the adrenal medulla (at protein level). Detected in adrenal medulla.

The protein localises to the cytoplasmic vesicle. It is found in the secretory vesicle lumen. The protein resides in the secretory vesicle. It localises to the chromaffin granule lumen. Its subcellular location is the secretory vesicle membrane. The protein localises to the chromaffin granule membrane. The catalysed reaction is dopamine + 2 L-ascorbate + O2 = (R)-noradrenaline + 2 monodehydro-L-ascorbate radical + H2O. It functions in the pathway catecholamine biosynthesis; (R)-noradrenaline biosynthesis; (R)-noradrenaline from dopamine: step 1/1. Catalyzes the hydroxylation of dopamine to noradrenaline (also known as norepinephrine), and is thus vital for regulation of these neurotransmitters. The protein is Dopamine beta-hydroxylase (DBH) of Bos taurus (Bovine).